A 214-amino-acid polypeptide reads, in one-letter code: Probable nicotinate-nucleotide adenylyltransferase (214 aa).

This sequence belongs to the NadD family.

The enzyme catalyses nicotinate beta-D-ribonucleotide + ATP + H(+) = deamido-NAD(+) + diphosphate. It functions in the pathway cofactor biosynthesis; NAD(+) biosynthesis; deamido-NAD(+) from nicotinate D-ribonucleotide: step 1/1. Functionally, catalyzes the reversible adenylation of nicotinate mononucleotide (NaMN) to nicotinic acid adenine dinucleotide (NaAD). This chain is Probable nicotinate-nucleotide adenylyltransferase, found in Pelodictyon phaeoclathratiforme (strain DSM 5477 / BU-1).